A 253-amino-acid polypeptide reads, in one-letter code: Methionine aminopeptidase (253 aa).

Histidine 78 serves as a coordination point for substrate. Residues aspartate 95, aspartate 106, and histidine 169 each contribute to the a divalent metal cation site. Histidine 176 contacts substrate. A divalent metal cation contacts are provided by glutamate 206 and glutamate 237.

Belongs to the peptidase M24A family. Methionine aminopeptidase type 1 subfamily. In terms of assembly, monomer. The cofactor is Co(2+). Requires Zn(2+) as cofactor. It depends on Mn(2+) as a cofactor. Fe(2+) is required as a cofactor.

The catalysed reaction is Release of N-terminal amino acids, preferentially methionine, from peptides and arylamides.. In terms of biological role, removes the N-terminal methionine from nascent proteins. The N-terminal methionine is often cleaved when the second residue in the primary sequence is small and uncharged (Met-Ala-, Cys, Gly, Pro, Ser, Thr, or Val). Requires deformylation of the N(alpha)-formylated initiator methionine before it can be hydrolyzed. This Helicobacter pylori (strain J99 / ATCC 700824) (Campylobacter pylori J99) protein is Methionine aminopeptidase.